We begin with the raw amino-acid sequence, 260 residues long: Hydroxyethylthiazole kinase (260 aa).

Methionine 38 contacts substrate. ATP contacts are provided by arginine 114 and threonine 159. Glycine 186 is a substrate binding site.

Belongs to the Thz kinase family. The cofactor is Mg(2+).

It catalyses the reaction 5-(2-hydroxyethyl)-4-methylthiazole + ATP = 4-methyl-5-(2-phosphooxyethyl)-thiazole + ADP + H(+). It functions in the pathway cofactor biosynthesis; thiamine diphosphate biosynthesis; 4-methyl-5-(2-phosphoethyl)-thiazole from 5-(2-hydroxyethyl)-4-methylthiazole: step 1/1. Functionally, catalyzes the phosphorylation of the hydroxyl group of 4-methyl-5-beta-hydroxyethylthiazole (THZ). This is Hydroxyethylthiazole kinase from Helicobacter pylori (strain HPAG1).